The primary structure comprises 629 residues: Acetylcholinesterase (629 aa).

The first 38 residues, 1–38, serve as a signal peptide directing secretion; that stretch reads MGQLSILCLFVTVCASVCGYSWPSDETTTKPSQFKDFH. Cysteine 103 and cysteine 130 are joined by a disulfide. The N-linked (GlcNAc...) asparagine glycan is linked to asparagine 125. The active-site Acyl-ester intermediate is the serine 253. Residues cysteine 307 and cysteine 322 are joined by a disulfide bond. Residue asparagine 308 is glycosylated (N-linked (GlcNAc...) asparagine). Glutamate 382 (charge relay system) is an active-site residue. N-linked (GlcNAc...) asparagine glycosylation is present at asparagine 418. A disulfide bond links cysteine 458 and cysteine 574. The Charge relay system role is filled by histidine 496. Asparagine 509 is a glycosylation site (N-linked (GlcNAc...) asparagine). Serine 605 is lipidated: GPI-anchor amidated serine. Positions 606 to 629 are cleaved as a propeptide — removed in mature form; that stretch reads SSNELLPPSTSLVLIWIMTLLNAL.

The protein belongs to the type-B carboxylesterase/lipase family. Homodimer; disulfide-linked. The N-terminus is blocked.

The protein resides in the synapse. Its subcellular location is the cell membrane. The catalysed reaction is acetylcholine + H2O = choline + acetate + H(+). In terms of biological role, rapidly hydrolyzes choline released into the synapse. The polypeptide is Acetylcholinesterase (Leptinotarsa decemlineata (Colorado potato beetle)).